The primary structure comprises 346 residues: Magnesium-protoporphyrin IX monomethyl ester [oxidative] cyclase (346 aa).

It belongs to the AcsF family. The cofactor is Fe cation.

It catalyses the reaction Mg-protoporphyrin IX 13-monomethyl ester + 3 NADPH + 3 O2 + 2 H(+) = 3,8-divinyl protochlorophyllide a + 3 NADP(+) + 5 H2O. The protein operates within porphyrin-containing compound metabolism; chlorophyll biosynthesis (light-independent). Functionally, catalyzes the formation of the isocyclic ring in chlorophyll biosynthesis. Mediates the cyclase reaction, which results in the formation of divinylprotochlorophyllide (Pchlide) characteristic of all chlorophylls from magnesium-protoporphyrin IX 13-monomethyl ester (MgPMME). The protein is Magnesium-protoporphyrin IX monomethyl ester [oxidative] cyclase of Gloeobacter violaceus (strain ATCC 29082 / PCC 7421).